The chain runs to 76 residues: Vasotab-TY3 (76 aa).

A signal peptide spans 1–21; that stretch reads MKFALFSVLVLMLIATFVAAD. A Kazal-like domain is found at 22–76; that stretch reads DCPRICTSDYTPVCGTPSGGRRSANRTFANQCGLDSHNCLNKGDTYDKLHDGECK. 3 disulfides stabilise this stretch: C23/C60, C27/C53, and C35/C75.

In terms of tissue distribution, expressed by the salivary gland.

The protein localises to the secreted. In terms of biological role, vasodilator protein that inhibits vasoconstriction of isolated rat femoral artery induced by phenylephrine. Since platelet aggregation and vasoconstriction are key hemostatic responses, particularly in small wounds, this protein likely participates in the antihemostatic responses during blood feeding. Blocks L-type calcium channels (Cav1/CACNA1) in left ventricular myocytes isolated from rat hearts. The sequence is that of Vasotab-TY3 from Tabanus yao (Horsefly).